Reading from the N-terminus, the 268-residue chain is Ubiquinone biosynthesis protein COQ4 homolog, mitochondrial (268 aa).

A mitochondrion-targeting transit peptide spans 1–25 (MMQRCLRLQKPLALRRGLHLAQVNS). Zn(2+) is bound by residues His-171, Asp-172, His-175, and Glu-187.

This sequence belongs to the COQ4 family. In terms of assembly, component of a multi-subunit COQ enzyme complex. Zn(2+) is required as a cofactor.

It localises to the mitochondrion inner membrane. It carries out the reaction a 4-hydroxy-3-methoxy-5-(all-trans-polyprenyl)benzoate + H(+) = a 2-methoxy-6-(all-trans-polyprenyl)phenol + CO2. Its pathway is cofactor biosynthesis; ubiquinone biosynthesis. Functionally, lyase that catalyzes the C1-decarboxylation of 4-hydroxy-3-methoxy-5-(all-trans-polyprenyl)benzoic acid into 2-methoxy-6-(all-trans-polyprenyl)phenol during ubiquinone biosynthesis. The sequence is that of Ubiquinone biosynthesis protein COQ4 homolog, mitochondrial from Drosophila simulans (Fruit fly).